Consider the following 143-residue polypeptide: Nucleoside diphosphate kinase (143 aa).

Residues Lys-11, Phe-59, Arg-87, Thr-93, Arg-104, and Asn-114 each contribute to the ATP site. His-117 (pros-phosphohistidine intermediate) is an active-site residue.

It belongs to the NDK family. As to quaternary structure, homotetramer. Requires Mg(2+) as cofactor.

It is found in the cytoplasm. The enzyme catalyses a 2'-deoxyribonucleoside 5'-diphosphate + ATP = a 2'-deoxyribonucleoside 5'-triphosphate + ADP. It carries out the reaction a ribonucleoside 5'-diphosphate + ATP = a ribonucleoside 5'-triphosphate + ADP. Its function is as follows. Major role in the synthesis of nucleoside triphosphates other than ATP. The ATP gamma phosphate is transferred to the NDP beta phosphate via a ping-pong mechanism, using a phosphorylated active-site intermediate. This is Nucleoside diphosphate kinase from Shewanella sp. (strain MR-4).